A 491-amino-acid polypeptide reads, in one-letter code: Transcriptional regulatory protein dep1 (491 aa).

2 disordered regions span residues 1–74 (MTEN…LPSQ) and 155–301 (NSVE…DDEK). A compositionally biased stretch (basic and acidic residues) spans 10-20 (IPHEILPKEPF). 2 stretches are compositionally biased toward polar residues: residues 54–63 (ALSNPETNAN) and 155–171 (NSVE…TIVS). The segment covering 175–186 (KESDFESEEKAT) has biased composition (basic and acidic residues). Positions 187–196 (NDNNGLIETN) are enriched in polar residues. Ser204 carries the phosphoserine modification. The span at 205–215 (SEHEEEEDEES) shows a compositional bias: acidic residues. Basic and acidic residues-rich tracts occupy residues 216 to 227 (NIERTEDSDHQI) and 282 to 301 (REIA…DDEK). The residue at position 223 (Ser223) is a Phosphoserine.

In terms of assembly, component of the RPD3C(L) complex.

Its subcellular location is the nucleus. Component of the RPD3C(L) histone deacetylase complex (HDAC) responsible for the deacetylation of lysine residues on the N-terminal part of the core histones (H2A, H2B, H3 and H4). Histone deacetylation gives a tag for epigenetic repression and plays an important role in transcriptional regulation, cell cycle progression and developmental events. The polypeptide is Transcriptional regulatory protein dep1 (dep1) (Schizosaccharomyces pombe (strain 972 / ATCC 24843) (Fission yeast)).